A 451-amino-acid polypeptide reads, in one-letter code: Probable carboxypeptidase PMAA_093910 (451 aa).

The first 19 residues, 1 to 19, serve as a signal peptide directing secretion; sequence MKVSSLLPSVLLLVGATRA. Asparagine 149 carries N-linked (GlcNAc...) asparagine glycosylation. Residue aspartate 171 coordinates Zn(2+). The Proton acceptor role is filled by glutamate 203. Glutamate 204 lines the Zn(2+) pocket. A glycan (N-linked (GlcNAc...) asparagine) is linked at asparagine 354.

Belongs to the peptidase M20A family. Requires Zn(2+) as cofactor.

It localises to the secreted. In Talaromyces marneffei (strain ATCC 18224 / CBS 334.59 / QM 7333) (Penicillium marneffei), this protein is Probable carboxypeptidase PMAA_093910.